Reading from the N-terminus, the 503-residue chain is 2-phosphoxylose phosphatase 1 (503 aa).

At 1-6 (MLARSR) the chain is on the cytoplasmic side. The chain crosses the membrane as a helical; Signal-anchor for type II membrane protein span at residues 7–27 (FILVLVVGALLAVLSFSLQYL). Residues 28 to 503 (HLIPTNPVAE…YQQACHQTVL (476 aa)) lie on the Lumenal side of the membrane. The disordered stretch occupies residues 38–63 (QRSAGRSRKRVNPVLHTDPPAPDPIR). Residue Asn73 is glycosylated (N-linked (GlcNAc...) asparagine). Catalysis depends on His98, which acts as the Nucleophile. Asn365 is a glycosylation site (N-linked (GlcNAc...) asparagine). The active-site Proton donor is Asp396. A glycan (N-linked (GlcNAc...) asparagine) is linked at Asn490.

This sequence belongs to the histidine acid phosphatase family.

The protein localises to the golgi apparatus membrane. The catalysed reaction is 3-O-[beta-D-GlcA-(1-&gt;3)-beta-D-Gal-(1-&gt;3)-beta-D-Gal-(1-&gt;4)-beta-D-2-O-P-Xyl]-L-seryl-[protein] + H2O = 3-O-(beta-D-GlcA-(1-&gt;3)-beta-D-Gal-(1-&gt;3)-beta-D-Gal-(1-&gt;4)-beta-D-Xyl)-L-seryl-[protein] + phosphate. Functionally, responsible for the 2-O-dephosphorylation of xylose in the glycosaminoglycan-protein linkage region of proteoglycans thereby regulating the amount of mature glycosaminoglycan (GAG) chains. Sulfated glycosaminoglycans (GAGs), including heparan sulfate and chondroitin sulfate, are synthesized on the so-called common GAG-protein linkage region (GlcUAbeta1-3Galbeta1-3Galbeta1-4Xylbeta1-O-Ser) of core proteins, which is formed by the stepwise addition of monosaccharide residues by the respective specific glycosyltransferases. This is 2-phosphoxylose phosphatase 1 from Danio rerio (Zebrafish).